A 104-amino-acid polypeptide reads, in one-letter code: MSKVTNVSINTKLDELLKGDQVIINFGAEWCGACKVLEPIFNKLSTQYPLVTFLKVEIDKINVHESTKSITSIPTIMLYQKGKKTKEIVSPNETQLRKILDSMK.

The Thioredoxin domain maps to 2–104 (SKVTNVSINT…QLRKILDSMK (103 aa)). Catalysis depends on nucleophile residues Cys31 and Cys34. The cysteines at positions 31 and 34 are disulfide-linked.

The protein belongs to the thioredoxin family.

Participates in various redox reactions through the reversible oxidation of its active center dithiol to a disulfide and catalyzes dithiol-disulfide exchange reactions. The sequence is that of Putative thioredoxin-4 (trxD) from Dictyostelium discoideum (Social amoeba).